We begin with the raw amino-acid sequence, 87 residues long: MPRLVLVSFLFLAIFSVFIGGFAKSKCPRNEIFTRCHAACQPSCARLARKPFCIKICKPGCICTSGYLRNKNNVCVPRSRCFSGRLL.

Residues 1-23 (MPRLVLVSFLFLAIFSVFIGGFA) form the signal peptide. Intrachain disulfides connect Cys27/Cys61, Cys36/Cys57, Cys40/Cys53, Cys44/Cys81, and Cys63/Cys75. The region spanning 27-81 (CPRNEIFTRCHAACQPSCARLARKPFCIKICKPGCICTSGYLRNKNNVCVPRSRC) is the TIL domain.

Belongs to the serine protease inhibitor-like (TIL domain-containing) family. In terms of tissue distribution, specifically expressed by the venom gland.

Its subcellular location is the secreted. In terms of biological role, antifibrinolytic and antimicrobial serine protease inhibitor. Inhibits trypsin, plasmin and microbial serine proteases but not chymotrypsin, thrombin and elastase. Inhibits the plasmin-mediated degradation of fibrin to fibrin degradation products. Also binds to bacterial and fungal surfaces and exhibits antimicrobial activity against fungi as well as Gram-positive and Gram-negative bacteria. In Apis cerana (Indian honeybee), this protein is Venom serine protease inhibitor.